A 352-amino-acid polypeptide reads, in one-letter code: 3-isopropylmalate dehydrogenase (352 aa).

Position 76-89 (76-89 (GYKWENLPHDKKPE)) interacts with NAD(+). Positions 96, 106, 134, and 220 each coordinate substrate. Asp-220, Asp-244, and Asp-248 together coordinate Mg(2+). 277–289 (GSAPDIAGQNKAN) is an NAD(+) binding site.

It belongs to the isocitrate and isopropylmalate dehydrogenases family. LeuB type 1 subfamily. As to quaternary structure, homodimer. Requires Mg(2+) as cofactor. The cofactor is Mn(2+).

The protein localises to the cytoplasm. It carries out the reaction (2R,3S)-3-isopropylmalate + NAD(+) = 4-methyl-2-oxopentanoate + CO2 + NADH. The protein operates within amino-acid biosynthesis; L-leucine biosynthesis; L-leucine from 3-methyl-2-oxobutanoate: step 3/4. In terms of biological role, catalyzes the oxidation of 3-carboxy-2-hydroxy-4-methylpentanoate (3-isopropylmalate) to 3-carboxy-4-methyl-2-oxopentanoate. The product decarboxylates to 4-methyl-2 oxopentanoate. The chain is 3-isopropylmalate dehydrogenase from Chlorobaculum tepidum (strain ATCC 49652 / DSM 12025 / NBRC 103806 / TLS) (Chlorobium tepidum).